The primary structure comprises 1907 residues: Receptor-type tyrosine-protein phosphatase F (1907 aa).

A signal peptide spans 1 to 29 (MAPEPAPGRTMVPLVPALVMLGLVAGAHG). Residues 30–1263 (DSKPVFIKVP…QQQEEPEMLW (1234 aa)) are Extracellular-facing. Ig-like C2-type domains lie at 33–123 (PVFI…AKLS), 135–224 (PSID…ANLY), and 232–314 (PRFS…AQVT). A disulfide bridge links Cys-54 with Cys-107. 68 to 77 (KKGKKVSSQR) lines the heparin pocket. An N-linked (GlcNAc...) asparagine glycan is attached at Asn-117. A disulfide bridge connects residues Cys-156 and Cys-207. N-linked (GlcNAc...) asparagine glycans are attached at residues Asn-250 and Asn-295. The cysteines at positions 253 and 298 are disulfide-linked. Fibronectin type-III domains lie at 321–411 (PPID…TGEQ), 416–510 (PPRR…TQQG), 514–604 (QPAD…TAQS), 609–706 (PPQK…TDED), 711–819 (PPRK…TTGA), 820–914 (VPGR…PEDL), 918–1010 (FPQN…TMPV), and 1014–1098 (FAKN…TAPD). A disordered region spans residues 398-417 (GPPSEAVRARTGEQAPSSPP). A disordered region spans residues 693 to 712 (GPESSPVLVRTDEDVPSGPP). An N-linked (GlcNAc...) asparagine glycan is attached at Asn-721. Asn-966 is a glycosylation site (N-linked (GlcNAc...) asparagine). Residues 1264-1284 (VTGPVLAVILIILIVIAILLF) traverse the membrane as a helical segment. Topologically, residues 1285–1907 (KRKRTHSPSS…YLGSFDHYAT (623 aa)) are cytoplasmic. A Phosphoserine modification is found at Ser-1305. 2 consecutive Tyrosine-protein phosphatase domains span residues 1352–1607 (FSQE…LLEA) and 1639–1898 (MELE…ALEY). Substrate is bound by residues Asp-1516, 1548–1554 (CSAGVGR), and Gln-1592. Catalysis depends on Cys-1548, which acts as the Phosphocysteine intermediate. Cys-1839 serves as the catalytic Phosphocysteine intermediate.

The protein belongs to the protein-tyrosine phosphatase family. Receptor class 2A subfamily. As to quaternary structure, interacts with GRIP1. Interacts with PPFIA1, PPFIA2 and PPFIA3. Interacts with INSR.

It localises to the membrane. It carries out the reaction O-phospho-L-tyrosyl-[protein] + H2O = L-tyrosyl-[protein] + phosphate. Functionally, possible cell adhesion receptor. It possesses an intrinsic protein tyrosine phosphatase activity (PTPase) and dephosphorylates EPHA2 regulating its activity. The first PTPase domain has enzymatic activity, while the second one seems to affect the substrate specificity of the first one. The sequence is that of Receptor-type tyrosine-protein phosphatase F (PTPRF) from Homo sapiens (Human).